Reading from the N-terminus, the 347-residue chain is Dihydroorotase (347 aa).

Residues His-14 and His-16 each coordinate Zn(2+). Residues 16-18 (HLR) and Asn-42 contribute to the substrate site. Residues Lys-100, His-137, and His-175 each coordinate Zn(2+). Lys-100 carries the N6-carboxylysine modification. His-137 is a binding site for substrate. Leu-220 lines the substrate pocket. Asp-248 contacts Zn(2+). Asp-248 is a catalytic residue. Residues His-252 and Ala-264 each coordinate substrate.

This sequence belongs to the metallo-dependent hydrolases superfamily. DHOase family. Class II DHOase subfamily. Homodimer. It depends on Zn(2+) as a cofactor.

It carries out the reaction (S)-dihydroorotate + H2O = N-carbamoyl-L-aspartate + H(+). It functions in the pathway pyrimidine metabolism; UMP biosynthesis via de novo pathway; (S)-dihydroorotate from bicarbonate: step 3/3. Catalyzes the reversible cyclization of carbamoyl aspartate to dihydroorotate. The polypeptide is Dihydroorotase (Pseudomonas savastanoi pv. phaseolicola (strain 1448A / Race 6) (Pseudomonas syringae pv. phaseolicola (strain 1448A / Race 6))).